The primary structure comprises 328 residues: BURP domain-containing protein 11 (328 aa).

In terms of domain architecture, BURP spans 74–318 (FFFRDALRPG…TKLSIVWVPR (245 aa)).

In terms of tissue distribution, expressed in roots.

In Oryza sativa subsp. japonica (Rice), this protein is BURP domain-containing protein 11 (BURP11).